Reading from the N-terminus, the 173-residue chain is uncharacterized protein (173 aa).

Basic and acidic residues predominate over residues 1–11 (MLCAKNKKDPK). Positions 1-173 (MLCAKNKKDP…EKMEKSEKAY (173 aa)) are disordered. Over residues 17-41 (FSETSKVQNVQNTQPKPAAPSQMSI) the composition is skewed to polar residues. Composition is skewed to basic and acidic residues over residues 56–109 (KSVE…KADN) and 120–144 (AKKEQEEENPKTDLESHKDEAEAKK). The segment covering 145–156 (KESRRQKKMRNK) has biased composition (basic residues). Over residues 157–173 (NSKEGSVEKMEKSEKAY) the composition is skewed to basic and acidic residues.

This is an uncharacterized protein from Caenorhabditis elegans.